We begin with the raw amino-acid sequence, 651 residues long: Sodium/potassium/calcium exchanger 2 (651 aa).

The Cytoplasmic segment spans residues 1–38 (MALCKKTVGSVLEEWCLNEPLFGCKRHQNVRKKLRLIR). Residues 39–59 (IIGLLVSVVAISTFSLSISAF) traverse the membrane as a helical segment. Topologically, residues 60-134 (FKMETHSTVL…DLFSLEERRK (75 aa)) are extracellular. The interval 92–123 (QNEGSTPDSPTSMKHEAEHDNATEEHSKGEYP) is disordered. A compositionally biased stretch (polar residues) spans 93–103 (NEGSTPDSPTS). Basic and acidic residues predominate over residues 104-122 (MKHEAEHDNATEEHSKGEY). N112 carries N-linked (GlcNAc...) asparagine glycosylation. A helical transmembrane segment spans residues 135–155 (GAVILHVIGMIYMFIALAIVC). The Cytoplasmic portion of the chain corresponds to 156–179 (DEFFVPSLTVITEKLSISDDVAGA). An Alpha-1 repeat occupies 176 to 216 (VAGATFMAAGGSAPELFTSLIGVFISHSNVGIGTIVGSAVF). A helical transmembrane segment spans residues 180–200 (TFMAAGGSAPELFTSLIGVFI). Topologically, residues 201–206 (SHSNVG) are extracellular. The chain crosses the membrane as a helical span at residues 207-227 (IGTIVGSAVFNILFVIGMCAL). Topologically, residues 228 to 245 (FSREILNLTWWPLFRDVS) are cytoplasmic. A helical membrane pass occupies residues 246 to 266 (FYIVDLILLIIFFLDNLIMWW). At 267 to 459 (ESLTLLTAYF…SLAWPDTPRK (193 aa)) the chain is on the extracellular side. A compositionally biased stretch (basic and acidic residues) spans 304–322 (ATTGDAEGKSPTAGDKDDQ). Residues 304–338 (ATTGDAEGKSPTAGDKDDQTLTTKPRLQRGGSSAS) are disordered. The segment covering 323 to 338 (TLTTKPRLQRGGSSAS) has biased composition (polar residues). Residues 460 to 480 (QLTYLLVLPIVFPLWVSLPDV) traverse the membrane as a helical segment. Residues 481–487 (RNPRSRK) are Cytoplasmic-facing. Residues 488–508 (FFPITFFGSISWIAFFSYLMV) form a helical membrane-spanning segment. At 509 to 523 (WWAHQVGETIGISEE) the chain is on the extracellular side. The helical transmembrane segment at 524-544 (IMGLTILAAGTSIPDLITSVI) threads the bilayer. The Alpha-2 repeat unit spans residues 531-562 (AAGTSIPDLITSVIVARKGLGDMAVSSSVGSN). The Cytoplasmic segment spans residues 545-562 (VARKGLGDMAVSSSVGSN). Residues 563–583 (IFDITVGLPLPWLLYAVINNF) traverse the membrane as a helical segment. Residues 584-592 (SPVTVSSNG) are Extracellular-facing. The helical transmembrane segment at 593 to 613 (LFCAIVLLFIMLLFVILSIAF) threads the bilayer. Over 614-620 (CKWRMNK) the chain is Cytoplasmic. The chain crosses the membrane as a helical span at residues 621–641 (FLGFLMFGLYFVFLIVSVLLE). The Extracellular portion of the chain corresponds to 642 to 651 (DKVIQCPVSI).

Belongs to the Ca(2+):cation antiporter (CaCA) (TC 2.A.19) family. SLC24A subfamily. As to expression, retinal cones. Found in the cone inner segment layer and in a subpopulation of ganglion cells.

The protein resides in the cell membrane. The enzyme catalyses Ca(2+)(out) + K(+)(out) + 4 Na(+)(in) = Ca(2+)(in) + K(+)(in) + 4 Na(+)(out). Functionally, calcium, potassium:sodium antiporter that transports 1 Ca(2+) and 1 K(+) in exchange for 4 Na(+). Required for learming and memory by regulating neuronal Ca(2+), which is essential for the development of synaptic plasticity. In Gallus gallus (Chicken), this protein is Sodium/potassium/calcium exchanger 2 (SLC24A2).